Reading from the N-terminus, the 387-residue chain is Protein RecA (387 aa).

Position 80–87 (80–87 (GPESSGKT)) interacts with ATP. The tract at residues 348-387 (LDDSEVAETEEETTASKTKAKAKKEEKXVETEEIELELQD) is disordered. 2 stretches are compositionally biased toward acidic residues: residues 349–360 (DDSEVAETEEET) and 378–387 (TEEIELELQD).

It belongs to the RecA family.

Its subcellular location is the cytoplasm. In terms of biological role, can catalyze the hydrolysis of ATP in the presence of single-stranded DNA, the ATP-dependent uptake of single-stranded DNA by duplex DNA, and the ATP-dependent hybridization of homologous single-stranded DNAs. It interacts with LexA causing its activation and leading to its autocatalytic cleavage. In Lactococcus lactis subsp. cremoris (Streptococcus cremoris), this protein is Protein RecA.